Reading from the N-terminus, the 430-residue chain is Serine hydroxymethyltransferase 2 (430 aa).

Residues leucine 128 and 132-134 contribute to the (6S)-5,6,7,8-tetrahydrofolate site; that span reads GHL. An N6-(pyridoxal phosphate)lysine modification is found at lysine 237.

This sequence belongs to the SHMT family. Homodimer. Pyridoxal 5'-phosphate is required as a cofactor.

It is found in the cytoplasm. It carries out the reaction (6R)-5,10-methylene-5,6,7,8-tetrahydrofolate + glycine + H2O = (6S)-5,6,7,8-tetrahydrofolate + L-serine. The protein operates within one-carbon metabolism; tetrahydrofolate interconversion. Its pathway is amino-acid biosynthesis; glycine biosynthesis; glycine from L-serine: step 1/1. Its function is as follows. Catalyzes the reversible interconversion of serine and glycine with tetrahydrofolate (THF) serving as the one-carbon carrier. This reaction serves as the major source of one-carbon groups required for the biosynthesis of purines, thymidylate, methionine, and other important biomolecules. Also exhibits THF-independent aldolase activity toward beta-hydroxyamino acids, producing glycine and aldehydes, via a retro-aldol mechanism. The chain is Serine hydroxymethyltransferase 2 from Rhodospirillum rubrum (strain ATCC 11170 / ATH 1.1.1 / DSM 467 / LMG 4362 / NCIMB 8255 / S1).